The primary structure comprises 199 residues: Probable nicotinate-nucleotide adenylyltransferase (199 aa).

Belongs to the NadD family.

The catalysed reaction is nicotinate beta-D-ribonucleotide + ATP + H(+) = deamido-NAD(+) + diphosphate. The protein operates within cofactor biosynthesis; NAD(+) biosynthesis; deamido-NAD(+) from nicotinate D-ribonucleotide: step 1/1. In terms of biological role, catalyzes the reversible adenylation of nicotinate mononucleotide (NaMN) to nicotinic acid adenine dinucleotide (NaAD). The sequence is that of Probable nicotinate-nucleotide adenylyltransferase from Leptospira interrogans serogroup Icterohaemorrhagiae serovar copenhageni (strain Fiocruz L1-130).